The sequence spans 256 residues: Type III pantothenate kinase (256 aa).

6–13 provides a ligand contact to ATP; it reads DVGNSHIY. Residues Tyr99 and 106–109 each bind substrate; that span reads GADR. Catalysis depends on Asp108, which acts as the Proton acceptor. Asp129 is a K(+) binding site. ATP is bound at residue Thr132. A substrate-binding site is contributed by Thr184.

It belongs to the type III pantothenate kinase family. Homodimer. Requires NH4(+) as cofactor. K(+) serves as cofactor.

Its subcellular location is the cytoplasm. It carries out the reaction (R)-pantothenate + ATP = (R)-4'-phosphopantothenate + ADP + H(+). It functions in the pathway cofactor biosynthesis; coenzyme A biosynthesis; CoA from (R)-pantothenate: step 1/5. Its function is as follows. Catalyzes the phosphorylation of pantothenate (Pan), the first step in CoA biosynthesis. The protein is Type III pantothenate kinase of Legionella pneumophila (strain Paris).